We begin with the raw amino-acid sequence, 556 residues long: Formate--tetrahydrofolate ligase (556 aa).

ATP is bound at residue 65–72 (TPAGEGKS).

It belongs to the formate--tetrahydrofolate ligase family.

The catalysed reaction is (6S)-5,6,7,8-tetrahydrofolate + formate + ATP = (6R)-10-formyltetrahydrofolate + ADP + phosphate. The protein operates within one-carbon metabolism; tetrahydrofolate interconversion. The sequence is that of Formate--tetrahydrofolate ligase from Streptococcus agalactiae serotype Ia (strain ATCC 27591 / A909 / CDC SS700).